The chain runs to 372 residues: 4-hydroxy-3-methylbut-2-en-1-yl diphosphate synthase (flavodoxin) (372 aa).

Residues cysteine 270, cysteine 273, cysteine 305, and glutamate 312 each contribute to the [4Fe-4S] cluster site.

Belongs to the IspG family. Requires [4Fe-4S] cluster as cofactor.

The catalysed reaction is (2E)-4-hydroxy-3-methylbut-2-enyl diphosphate + oxidized [flavodoxin] + H2O + 2 H(+) = 2-C-methyl-D-erythritol 2,4-cyclic diphosphate + reduced [flavodoxin]. Its pathway is isoprenoid biosynthesis; isopentenyl diphosphate biosynthesis via DXP pathway; isopentenyl diphosphate from 1-deoxy-D-xylulose 5-phosphate: step 5/6. Converts 2C-methyl-D-erythritol 2,4-cyclodiphosphate (ME-2,4cPP) into 1-hydroxy-2-methyl-2-(E)-butenyl 4-diphosphate. This is 4-hydroxy-3-methylbut-2-en-1-yl diphosphate synthase (flavodoxin) from Salmonella gallinarum (strain 287/91 / NCTC 13346).